The sequence spans 127 residues: Aspartate 1-decarboxylase (127 aa).

The active-site Schiff-base intermediate with substrate; via pyruvic acid is the Ser-25. A Pyruvic acid (Ser) modification is found at Ser-25. Thr-57 is a binding site for substrate. The active-site Proton donor is Tyr-58. 73–75 (GAA) is a substrate binding site.

It belongs to the PanD family. As to quaternary structure, heterooctamer of four alpha and four beta subunits. Pyruvate is required as a cofactor. Post-translationally, is synthesized initially as an inactive proenzyme, which is activated by self-cleavage at a specific serine bond to produce a beta-subunit with a hydroxyl group at its C-terminus and an alpha-subunit with a pyruvoyl group at its N-terminus.

Its subcellular location is the cytoplasm. The enzyme catalyses L-aspartate + H(+) = beta-alanine + CO2. The protein operates within cofactor biosynthesis; (R)-pantothenate biosynthesis; beta-alanine from L-aspartate: step 1/1. In terms of biological role, catalyzes the pyruvoyl-dependent decarboxylation of aspartate to produce beta-alanine. The sequence is that of Aspartate 1-decarboxylase from Staphylococcus aureus (strain bovine RF122 / ET3-1).